The following is a 70-amino-acid chain: MREIFTGLPWWVKWIAVPVIALVVFGGLIVSVVGFVVGLLFKLLVFVALVGGLIYVVRKFMSSSSSRSDW.

A run of 2 helical transmembrane segments spans residues 19-39 (VIALVVFGGLIVSVVGFVVGL) and 40-60 (LFKLLVFVALVGGLIYVVRKF).

The protein resides in the cell membrane. This is an uncharacterized protein from Streptomyces coelicolor (strain ATCC BAA-471 / A3(2) / M145).